The following is a 233-amino-acid chain: Small ribosomal subunit protein uS2c (233 aa).

Belongs to the universal ribosomal protein uS2 family.

It localises to the plastid. Its subcellular location is the cyanelle. The chain is Small ribosomal subunit protein uS2c (rps2) from Cyanophora paradoxa.